We begin with the raw amino-acid sequence, 434 residues long: MEQNTYYFVGIKGTGMASLARILHDKGHQVLGSDIEKETFTQAPLLAAGIKILPFDPANLKPGMIVIQGNAFDDDHPEIKRAHELGLKILSYPEAVENEVKNHTSIGIAGAHGKTSTTALLSHVLAAVEPTSYLIGDGVGKGNADARFFVFEADEYRDHFLAYHPDYAIMTNVDFDHPDYFNDLADVRDSFETYGKQVQRAIFAWGDDPSLRDLNVDVPVYYYGTNPDDDFRAENIQRTPEGSTYDAYFRDQKLGTFTIHLYGEHSVLNSLAVLAVAYMEHMNMDEIQQELANFSGVKRRFSETDIADTTIIDDYAHHPSEIKATIDAARQKYPDREVIAVFQPHTYSRLAAYIDGFAESLSRADKTFVTPIFGSIRENAGNVSSADLEQRIDGSEGIDMDTMDKLLQYHNAVVVFMGAGDVEKYEEKYKELLK.

Position 110-116 (110-116 (GAHGKTS)) interacts with ATP.

Belongs to the MurCDEF family.

It is found in the cytoplasm. It carries out the reaction UDP-N-acetyl-alpha-D-muramate + L-alanine + ATP = UDP-N-acetyl-alpha-D-muramoyl-L-alanine + ADP + phosphate + H(+). It functions in the pathway cell wall biogenesis; peptidoglycan biosynthesis. Its function is as follows. Cell wall formation. In Limosilactobacillus reuteri (strain DSM 20016) (Lactobacillus reuteri), this protein is UDP-N-acetylmuramate--L-alanine ligase.